A 133-amino-acid polypeptide reads, in one-letter code: Male-specific protein scotti (133 aa).

The interval 11-57 (FPSNGLGNNNNDPNQQRGERPRQPHPDLGWILDAPNEPPRNRNPLLY) is disordered. Over residues 14–24 (NGLGNNNNDPN) the composition is skewed to low complexity. N83 carries an N-linked (GlcNAc...) asparagine glycan.

The protein belongs to the male-specific scotti family.

Post-meiotically transcribed gene that has a role in late spermiogenesis; required for actin cone progression during spermatid individualization. The chain is Male-specific protein scotti from Drosophila persimilis (Fruit fly).